Reading from the N-terminus, the 393-residue chain is 4-hydroxyphenylpyruvate dioxygenase (393 aa).

Residue Thr2 is modified to N-acetylthreonine. VOC domains lie at 18-149 (HFHS…LVEK) and 180-338 (IIDH…IFTK). An N6-succinyllysine modification is found at Lys132. His183 contacts Fe cation. Residues Ser211, Ser226, and Ser250 each carry the phosphoserine modification. Residues His266 and Glu349 each coordinate Fe cation.

It belongs to the 4HPPD family. As to quaternary structure, homodimer. The cofactor is Fe cation.

The protein resides in the cytoplasm. Its subcellular location is the endoplasmic reticulum membrane. The protein localises to the golgi apparatus membrane. It catalyses the reaction 3-(4-hydroxyphenyl)pyruvate + O2 = homogentisate + CO2. It functions in the pathway amino-acid degradation; L-phenylalanine degradation; acetoacetate and fumarate from L-phenylalanine: step 3/6. Its function is as follows. Catalyzes the conversion of 4-hydroxyphenylpyruvic acid to homogentisic acid, one of the steps in tyrosine catabolism. This is 4-hydroxyphenylpyruvate dioxygenase (Hpd) from Rattus norvegicus (Rat).